Reading from the N-terminus, the 528-residue chain is Na(+)/H(+) antiporter NhaB (528 aa).

Transmembrane regions (helical) follow at residues 25 to 47 (IISF…GWLL), 66 to 86 (PGGL…SQVL), 97 to 117 (LLLV…LFVF), 130 to 164 (VSLL…FYSI), 241 to 261 (IRMS…CFLV), 304 to 324 (AFIG…VGLI), 351 to 371 (ALPF…IIDL), 390 to 410 (LVVF…VFVG), 448 to 468 (ATPN…APLI), and 476 to 496 (VWMA…AIQL).

It belongs to the NhaB Na(+)/H(+) (TC 2.A.34) antiporter family.

It localises to the cell inner membrane. The enzyme catalyses 2 Na(+)(in) + 3 H(+)(out) = 2 Na(+)(out) + 3 H(+)(in). Functionally, na(+)/H(+) antiporter that extrudes sodium in exchange for external protons. This is Na(+)/H(+) antiporter NhaB from Shewanella halifaxensis (strain HAW-EB4).